We begin with the raw amino-acid sequence, 265 residues long: (-)-isopiperitenol/(-)-carveol dehydrogenase, mitochondrial (265 aa).

The transit peptide at 1–30 (MASVKKLAGKVAIVTGGASGIGEVTARLFA) directs the protein to the mitochondrion. 13-38 (IVTGGASGIGEVTARLFAERGARAVV) provides a ligand contact to NAD(+). A substrate-binding site is contributed by Ser147. Tyr160 acts as the Proton acceptor in catalysis.

Belongs to the short-chain dehydrogenases/reductases (SDR) family. In terms of assembly, homodimer and homotetramer. Peltate glandular trichomes.

The protein localises to the mitochondrion. The catalysed reaction is (1S,6R)-isopiperitenol + NAD(+) = (6R)-isopiperitenone + NADH + H(+). The enzyme catalyses (1S,5R)-carveol + NADP(+) = (R)-carvone + NADPH + H(+). Its function is as follows. Involved in the biosynthesis of menthol and related monoterpenes in leaves. Can use (-)-trans-carveol and, with a lower relative velocity, (-)-trans-isopiperitenol, (+)-neomenthol, (+)-neoisomenthol and (-)-cis-isopiperitenol as substrates, but not (-)-cis-carvenol, (-)-menthol, (+)-isomenthol, 7-hydroxy-limonene, (-)-isopiperitenone or (-)-carvone. This Mentha piperita (Peppermint) protein is (-)-isopiperitenol/(-)-carveol dehydrogenase, mitochondrial.